Here is a 276-residue protein sequence, read N- to C-terminus: NADPH-dependent 7-cyano-7-deazaguanine reductase (276 aa).

Substrate is bound at residue 83 to 85; it reads IES. 85-86 contacts NADPH; it reads SK. The active-site Thioimide intermediate is the Cys184. Asp191 (proton donor) is an active-site residue. 223–224 is a binding site for substrate; that stretch reads HE. 252 to 253 contributes to the NADPH binding site; that stretch reads RG.

The protein belongs to the GTP cyclohydrolase I family. QueF type 2 subfamily. In terms of assembly, homodimer.

It is found in the cytoplasm. The enzyme catalyses 7-aminomethyl-7-carbaguanine + 2 NADP(+) = 7-cyano-7-deazaguanine + 2 NADPH + 3 H(+). It participates in tRNA modification; tRNA-queuosine biosynthesis. Catalyzes the NADPH-dependent reduction of 7-cyano-7-deazaguanine (preQ0) to 7-aminomethyl-7-deazaguanine (preQ1). The protein is NADPH-dependent 7-cyano-7-deazaguanine reductase of Desulfotalea psychrophila (strain LSv54 / DSM 12343).